The sequence spans 158 residues: Regulator of sigma D (158 aa).

Belongs to the Rsd/AlgQ family. In terms of assembly, interacts with RpoD.

It localises to the cytoplasm. Its function is as follows. Binds RpoD and negatively regulates RpoD-mediated transcription activation by preventing the interaction between the primary sigma factor RpoD with the catalytic core of the RNA polymerase and with promoter DNA. May be involved in replacement of the RNA polymerase sigma subunit from RpoD to RpoS during the transition from exponential growth to the stationary phase. The sequence is that of Regulator of sigma D from Escherichia coli (strain SMS-3-5 / SECEC).